The primary structure comprises 2489 residues: Protein YPR117W (2489 aa).

Helical transmembrane passes span 19–39 (FMLF…WILM) and 128–148 (VLSI…LALT). N-linked (GlcNAc...) asparagine glycosylation is found at asparagine 191, asparagine 210, asparagine 311, asparagine 452, asparagine 468, asparagine 605, asparagine 638, asparagine 663, asparagine 698, asparagine 789, asparagine 835, asparagine 981, asparagine 1255, asparagine 1404, and asparagine 1476. Positions 1610–1676 (LTQEKLATER…RLHTVNTILS (67 aa)) form a coiled coil. The disordered stretch occupies residues 1685 to 1704 (PGGNTDGDSSSSLSDTDVNL). The segment covering 1690-1704 (DGDSSSSLSDTDVNL) has biased composition (low complexity). Asparagine 1978 and asparagine 2189 each carry an N-linked (GlcNAc...) asparagine glycan. A phosphoserine mark is found at serine 2254 and serine 2278. Asparagine 2279 is a glycosylation site (N-linked (GlcNAc...) asparagine). The segment covering 2451-2471 (SSTHSSDIRSINSDETYNEND) has biased composition (polar residues). The segment at 2451–2489 (SSTHSSDIRSINSDETYNENDGNGVKPFYPVTSEFSKNK) is disordered.

The protein localises to the cell membrane. Its subcellular location is the endoplasmic reticulum membrane. It is found in the mitochondrion membrane. In terms of biological role, tube-forming lipid transport protein which may bind to phosphatidylinositols and may affect phosphatidylinositol-4,5-bisphosphate (PtdIns-4,5-P2) distribution. This chain is Protein YPR117W, found in Saccharomyces cerevisiae (strain ATCC 204508 / S288c) (Baker's yeast).